A 465-amino-acid chain; its full sequence is Ribulose bisphosphate carboxylase large chain (465 aa).

Lys-4 carries the post-translational modification N6,N6,N6-trimethyllysine. 2 residues coordinate substrate: Asn-113 and Thr-163. Lys-165 (proton acceptor) is an active-site residue. Lys-167 contacts substrate. The Mg(2+) site is built by Lys-191, Asp-193, and Glu-194. The residue at position 191 (Lys-191) is an N6-carboxylysine. His-284 (proton acceptor) is an active-site residue. Substrate is bound by residues Arg-285, His-317, and Ser-369.

It belongs to the RuBisCO large chain family. Type I subfamily. As to quaternary structure, heterohexadecamer of 8 large chains and 8 small chains; disulfide-linked. The disulfide link is formed within the large subunit homodimers. Mg(2+) serves as cofactor. The disulfide bond which can form in the large chain dimeric partners within the hexadecamer appears to be associated with oxidative stress and protein turnover.

The protein resides in the plastid. Its subcellular location is the chloroplast. The enzyme catalyses 2 (2R)-3-phosphoglycerate + 2 H(+) = D-ribulose 1,5-bisphosphate + CO2 + H2O. It catalyses the reaction D-ribulose 1,5-bisphosphate + O2 = 2-phosphoglycolate + (2R)-3-phosphoglycerate + 2 H(+). Its function is as follows. RuBisCO catalyzes two reactions: the carboxylation of D-ribulose 1,5-bisphosphate, the primary event in carbon dioxide fixation, as well as the oxidative fragmentation of the pentose substrate in the photorespiration process. Both reactions occur simultaneously and in competition at the same active site. The protein is Ribulose bisphosphate carboxylase large chain of Casuarina equisetifolia (Beach she-oak).